The primary structure comprises 1187 residues: uncharacterized protein (1187 aa).

Disordered regions lie at residues 302–405, 419–451, 511–551, 1095–1134, and 1148–1187; these read QKSQ…KPVG, QAFS…RASK, KAPG…LRLE, KSQR…KLPD, and PHLP…PASL. The span at 321 to 333 shows a compositional bias: low complexity; the sequence is LPLSGPAGAPPLG. Positions 352-361 are enriched in basic residues; that stretch reads SRRKARHKAS. 2 stretches are compositionally biased toward low complexity: residues 422-435 and 517-534; these read SPLL…SPAA and GTTL…GEPP. The span at 1096–1107 shows a compositional bias: polar residues; sequence SQRTPQGEQSRN. Residues 1160–1174 show a composition bias toward low complexity; it reads TGGSFSSEGTGSQTS.

This is an uncharacterized protein from Mus musculus (Mouse).